The sequence spans 45 residues: Mu-conotoxin-like Cal 12.1.2d (45 aa).

4 disulfide bridges follow: Cys3/Cys16, Cys11/Cys28, Cys18/Cys33, and Cys27/Cys39. Trp17 carries the post-translational modification 6'-bromotryptophan. Pro23 bears the 4-hydroxyproline mark. 6'-bromotryptophan is present on residues Trp37 and Trp38. Pro40 bears the 4-hydroxyproline mark.

As to expression, expressed by the venom duct.

Its subcellular location is the secreted. Mu-conotoxins block voltage-gated sodium channels. This toxin reversibly blocks voltage-gated sodium channel in cephalopods, with no alteration in the voltage dependence of sodium conductance or on the kinetics of inactivation. This is Mu-conotoxin-like Cal 12.1.2d from Californiconus californicus (California cone).